A 210-amino-acid chain; its full sequence is Adenylate kinase (210 aa).

Residue 10-15 (GSGKGT) coordinates ATP. Positions 30 to 54 (SCGDILRKQNKCCDINKLIKKGELI) are NMP. AMP is bound by residues Arg36, 52 to 54 (ELI), 80 to 83 (GFPR), and Gln87. The tract at residues 117-154 (GRIIDKVSGEIYHLKFNPPKFITEKSNKNKILVRRLDD) is LID. Residues Arg118 and 127-128 (IY) contribute to the ATP site. AMP is bound by residues Arg151 and Arg162. ATP is bound at residue Phe195.

Belongs to the adenylate kinase family. As to quaternary structure, monomer.

It localises to the cytoplasm. It catalyses the reaction AMP + ATP = 2 ADP. Its pathway is purine metabolism; AMP biosynthesis via salvage pathway; AMP from ADP: step 1/1. Catalyzes the reversible transfer of the terminal phosphate group between ATP and AMP. Plays an important role in cellular energy homeostasis and in adenine nucleotide metabolism. The polypeptide is Adenylate kinase (Wigglesworthia glossinidia brevipalpis).